Consider the following 500-residue polypeptide: Glycerol kinase (500 aa).

Thr11 serves as a coordination point for ADP. ATP-binding residues include Thr11, Thr12, and Ser13. Thr11 provides a ligand contact to sn-glycerol 3-phosphate. Residue Arg15 coordinates ADP. Sn-glycerol 3-phosphate-binding residues include Arg81, Glu82, Tyr133, and Asp242. Glycerol-binding residues include Arg81, Glu82, Tyr133, Asp242, and Gln243. 2 residues coordinate ADP: Thr264 and Gly307. Residues Thr264, Gly307, Gln311, and Gly411 each coordinate ATP. Gly411 contacts ADP.

Belongs to the FGGY kinase family.

It catalyses the reaction glycerol + ATP = sn-glycerol 3-phosphate + ADP + H(+). Its pathway is polyol metabolism; glycerol degradation via glycerol kinase pathway; sn-glycerol 3-phosphate from glycerol: step 1/1. Inhibited by fructose 1,6-bisphosphate (FBP). Functionally, key enzyme in the regulation of glycerol uptake and metabolism. Catalyzes the phosphorylation of glycerol to yield sn-glycerol 3-phosphate. This chain is Glycerol kinase, found in Bradyrhizobium diazoefficiens (strain JCM 10833 / BCRC 13528 / IAM 13628 / NBRC 14792 / USDA 110).